Reading from the N-terminus, the 316-residue chain is Endochitinase WIN8 (316 aa).

An N-terminal signal peptide occupies residues methionine 1 to threonine 23. The Chitin-binding type-1 domain maps to alanine 24–asparagine 64. 7 disulfides stabilise this stretch: cysteine 26–cysteine 41, cysteine 35–cysteine 47, cysteine 40–cysteine 54, cysteine 58–cysteine 62, cysteine 84–cysteine 146, cysteine 158–cysteine 168, and cysteine 266–cysteine 298. The Proton donor role is filled by glutamate 128.

Belongs to the glycosyl hydrolase 19 family. Chitinase class I subfamily.

It catalyses the reaction Random endo-hydrolysis of N-acetyl-beta-D-glucosaminide (1-&gt;4)-beta-linkages in chitin and chitodextrins.. Defense against chitin-containing fungal pathogens. This chain is Endochitinase WIN8 (WIN8), found in Populus trichocarpa (Western balsam poplar).